The following is a 100-amino-acid chain: Nucleoid-associated protein Caur_0522 (100 aa).

This sequence belongs to the YbaB/EbfC family. In terms of assembly, homodimer.

The protein resides in the cytoplasm. It localises to the nucleoid. Functionally, binds to DNA and alters its conformation. May be involved in regulation of gene expression, nucleoid organization and DNA protection. The sequence is that of Nucleoid-associated protein Caur_0522 from Chloroflexus aurantiacus (strain ATCC 29366 / DSM 635 / J-10-fl).